Here is a 170-residue protein sequence, read N- to C-terminus: Putative 4-hydroxy-4-methyl-2-oxoglutarate aldolase (170 aa).

Residues G85 to I88 and R107 each bind substrate. Residue D108 participates in a divalent metal cation binding.

The protein belongs to the class II aldolase/RraA-like family. In terms of assembly, homotrimer. The cofactor is a divalent metal cation.

It catalyses the reaction 4-hydroxy-4-methyl-2-oxoglutarate = 2 pyruvate. It carries out the reaction oxaloacetate + H(+) = pyruvate + CO2. Its function is as follows. Catalyzes the aldol cleavage of 4-hydroxy-4-methyl-2-oxoglutarate (HMG) into 2 molecules of pyruvate. Also contains a secondary oxaloacetate (OAA) decarboxylase activity due to the common pyruvate enolate transition state formed following C-C bond cleavage in the retro-aldol and decarboxylation reactions. This Acinetobacter baylyi (strain ATCC 33305 / BD413 / ADP1) protein is Putative 4-hydroxy-4-methyl-2-oxoglutarate aldolase.